The primary structure comprises 431 residues: Adenylosuccinate synthetase (431 aa).

GTP is bound by residues 12–18 (GDEGKGK) and 40–42 (GHT). Asp13 functions as the Proton acceptor in the catalytic mechanism. The Mg(2+) site is built by Asp13 and Gly40. IMP is bound by residues 13–16 (DEGK), 38–41 (NAGH), Thr131, Arg145, Gln225, Thr240, and Arg304. The Proton donor role is filled by His41. 300 to 306 (TTTGRKR) serves as a coordination point for substrate. GTP-binding positions include Arg306, 332–334 (KLD), and 414–416 (STS).

The protein belongs to the adenylosuccinate synthetase family. As to quaternary structure, homodimer. It depends on Mg(2+) as a cofactor.

It is found in the cytoplasm. The enzyme catalyses IMP + L-aspartate + GTP = N(6)-(1,2-dicarboxyethyl)-AMP + GDP + phosphate + 2 H(+). The protein operates within purine metabolism; AMP biosynthesis via de novo pathway; AMP from IMP: step 1/2. Functionally, plays an important role in the de novo pathway of purine nucleotide biosynthesis. Catalyzes the first committed step in the biosynthesis of AMP from IMP. The polypeptide is Adenylosuccinate synthetase (Jannaschia sp. (strain CCS1)).